Consider the following 517-residue polypeptide: L-amino-acid oxidase (517 aa).

The N-terminal stretch at 1–18 (MNVFFMFSLLFLAALESC) is a signal peptide. Cys-29 and Cys-192 are joined by a disulfide. FAD-binding positions include 62–63 (MA), 82–83 (EA), Arg-90, and 106–109 (GPMR). Arg-109 contributes to the substrate binding site. N-linked (GlcNAc...) asparagine glycosylation occurs at Asn-191. Val-280 serves as a coordination point for FAD. Cys-350 and Cys-431 are oxidised to a cystine. Tyr-391 is a binding site for substrate. FAD-binding positions include Glu-476 and 483-488 (GWIDST). 483 to 484 (GW) serves as a coordination point for substrate.

This sequence belongs to the flavin monoamine oxidase family. FIG1 subfamily. In terms of assembly, homodimer; non-covalently linked. FAD serves as cofactor. Post-translationally, N-glycosylated. As to expression, expressed by the venom gland.

It localises to the secreted. It carries out the reaction an L-alpha-amino acid + O2 + H2O = a 2-oxocarboxylate + H2O2 + NH4(+). In terms of biological role, catalyzes an oxidative deamination of predominantly hydrophobic and aromatic L-amino acids, thus producing hydrogen peroxide that may contribute to the diverse toxic effects of this enzyme. Exhibits diverse biological activities, such as hemorrhage, hemolysis, edema, apoptosis of vascular endothelial cells or tumor cell lines, antibacterial and antiparasitic activities, as well as regulation of platelet aggregation. Its effect on platelets is controversial, since it either induces aggregation or inhibits agonist-induced aggregation. These different effects are probably due to different experimental conditions. In Demansia vestigiata (Lesser black whip snake), this protein is L-amino-acid oxidase.